We begin with the raw amino-acid sequence, 177 residues long: Large ribosomal subunit protein uL6 (177 aa).

It belongs to the universal ribosomal protein uL6 family. As to quaternary structure, part of the 50S ribosomal subunit.

Its function is as follows. This protein binds to the 23S rRNA, and is important in its secondary structure. It is located near the subunit interface in the base of the L7/L12 stalk, and near the tRNA binding site of the peptidyltransferase center. The chain is Large ribosomal subunit protein uL6 from Salmonella arizonae (strain ATCC BAA-731 / CDC346-86 / RSK2980).